The primary structure comprises 450 residues: Phosphoglucosamine mutase (450 aa).

Ser101 acts as the Phosphoserine intermediate in catalysis. Mg(2+) contacts are provided by Ser101, Asp240, Asp242, and Asp244. Position 101 is a phosphoserine (Ser101).

This sequence belongs to the phosphohexose mutase family. Mg(2+) serves as cofactor. Activated by phosphorylation.

The catalysed reaction is alpha-D-glucosamine 1-phosphate = D-glucosamine 6-phosphate. Catalyzes the conversion of glucosamine-6-phosphate to glucosamine-1-phosphate. This chain is Phosphoglucosamine mutase, found in Streptococcus agalactiae serotype Ia (strain ATCC 27591 / A909 / CDC SS700).